The primary structure comprises 948 residues: Alanine--tRNA ligase (948 aa).

The Zn(2+) site is built by H638, H642, C739, and H743.

It belongs to the class-II aminoacyl-tRNA synthetase family. Zn(2+) is required as a cofactor.

The protein localises to the cytoplasm. The catalysed reaction is tRNA(Ala) + L-alanine + ATP = L-alanyl-tRNA(Ala) + AMP + diphosphate. Its function is as follows. Catalyzes the attachment of alanine to tRNA(Ala) in a two-step reaction: alanine is first activated by ATP to form Ala-AMP and then transferred to the acceptor end of tRNA(Ala). Also edits incorrectly charged Ser-tRNA(Ala) and Gly-tRNA(Ala) via its editing domain. In Paracidovorax citrulli (strain AAC00-1) (Acidovorax citrulli), this protein is Alanine--tRNA ligase.